Reading from the N-terminus, the 349-residue chain is MPLVAHNALPTFERLRRDGITVLSTERAANQEIRELHVGLLNMMPDAALEATERQFYRLVGESNPIAQFYMHPFTLETLPRGDKARAHIGRHYEKFEDIRAAGLDALIITGANVSHANLADEAFWQPLIEVIDWAWDNVTSTLCSCLATHAVMQFRYAQTRVLQPRKIWGVFEHRVTDVRHPLVADVNTRFDVPHSRWNDVSRAQFEAAGVKVLVESEEAGVHLAVSGDGLRTVFFQGHPEYDTVSLLKEYKRDLLLATTGALAEPPFPRRYFDRKAQAFLAEFARRTRVGETLVFPEAEVVPLLDNTWHDTAEAVIGNWIGCVYQVTHRERGLPFMPGVDPDNPLGLA.

Cysteine 146 serves as the catalytic Acyl-thioester intermediate. Substrate is bound by residues lysine 167 and serine 196. Histidine 239 acts as the Proton acceptor in catalysis. Residue glutamate 241 is part of the active site. Position 253 (arginine 253) interacts with substrate.

The protein belongs to the MetA family.

Its subcellular location is the cytoplasm. It carries out the reaction L-homoserine + succinyl-CoA = O-succinyl-L-homoserine + CoA. It participates in amino-acid biosynthesis; L-methionine biosynthesis via de novo pathway; O-succinyl-L-homoserine from L-homoserine: step 1/1. In terms of biological role, transfers a succinyl group from succinyl-CoA to L-homoserine, forming succinyl-L-homoserine. In vitro, can also use glutaryl-CoA as acyl donor. This chain is Homoserine O-succinyltransferase, found in Thiobacillus denitrificans (strain ATCC 25259 / T1).